A 415-amino-acid polypeptide reads, in one-letter code: Mitochondrial tRNA-specific 2-thiouridylase 1 (415 aa).

ATP-binding positions include 37-44 (AMSGGVDS) and Met-63. Residues 124–126 (NPD) are interaction with target base in tRNA. Residue Cys-129 is the Nucleophile of the active site. A disulfide bridge connects residues Cys-129 and Cys-234. Residue Gly-159 coordinates ATP. The segment at 183-185 (KDQ) is interaction with tRNA. Cys-234 serves as the catalytic Cysteine persulfide intermediate. The tract at residues 356-357 (RH) is interaction with tRNA.

This sequence belongs to the MnmA/TRMU family.

Its subcellular location is the mitochondrion. The catalysed reaction is 5-taurinomethyluridine(34) in tRNA + S-sulfanyl-L-cysteinyl-[protein] + AH2 + ATP = 5-taurinomethyl-2-thiouridine(34) in tRNA + L-cysteinyl-[protein] + A + AMP + diphosphate + H(+). In terms of biological role, catalyzes the 2-thiolation of uridine at the wobble position (U34) of mitochondrial tRNA(Lys), tRNA(Glu) and tRNA(Gln). Required for the formation of 5-taurinomethyl-2-thiouridine (tm5s2U) of mitochondrial tRNA(Lys), tRNA(Glu), and tRNA(Gln) at the wobble position. ATP is required to activate the C2 atom of the wobble base. The protein is Mitochondrial tRNA-specific 2-thiouridylase 1 of Schizosaccharomyces pombe (strain 972 / ATCC 24843) (Fission yeast).